The primary structure comprises 100 residues: Small ribosomal subunit protein uS14 (100 aa).

The protein belongs to the universal ribosomal protein uS14 family. As to quaternary structure, part of the 30S ribosomal subunit. Contacts proteins S3 and S10.

Its function is as follows. Binds 16S rRNA, required for the assembly of 30S particles and may also be responsible for determining the conformation of the 16S rRNA at the A site. This is Small ribosomal subunit protein uS14 from Synechococcus sp. (strain RCC307).